The chain runs to 78 residues: MSRVCQVTGKRPAVGNNRSHANNATKRRFLPNLHTHRFWVEGEKRFVSLRVSAKGMRIIDKRGVEVVLAELRASGVKV.

The segment at 1 to 24 is disordered; the sequence is MSRVCQVTGKRPAVGNNRSHANNA.

This sequence belongs to the bacterial ribosomal protein bL28 family.

This Aeromonas salmonicida (strain A449) protein is Large ribosomal subunit protein bL28.